The primary structure comprises 320 residues: MQTRNTFFWIKEQMTRSISVSIIVYVITQTSISNAYPIFAQQGYENPREATGRIVCANCHLANKPLDIEVPQAVLPDTVFEAVVRIPYDMQLKQVLANGKKGALNVGAVLILPEGFELAPPDRISPEMKEKIGNLSFQSYRPTKKNILVIGPVPGQKYSEITFPILSPDPATKKDVHFLKYPIYVGGNRGRGQIYPDGSKSNNTVYNATAAGIISKIIRKEKGGYEITIADASDGHQVVNIIPPGPELLVSEGESIKLDQPLTSNPNVGGFGQGDAEIVLQDPLRVQGLLFFFASVILAQIFLVLKKKQFEKVQLSEMNF.

The signal sequence occupies residues 1–35 (MQTRNTFFWIKEQMTRSISVSIIVYVITQTSISNA). Heme is bound by residues Y36, C56, C59, and H60. The chain crosses the membrane as a helical span at residues 286-306 (VQGLLFFFASVILAQIFLVLK).

Belongs to the cytochrome f family. As to quaternary structure, the 4 large subunits of the cytochrome b6-f complex are cytochrome b6, subunit IV (17 kDa polypeptide, petD), cytochrome f and the Rieske protein, while the 4 small subunits are PetG, PetL, PetM and PetN. The complex functions as a dimer. Heme is required as a cofactor.

It is found in the plastid. The protein localises to the chloroplast thylakoid membrane. In terms of biological role, component of the cytochrome b6-f complex, which mediates electron transfer between photosystem II (PSII) and photosystem I (PSI), cyclic electron flow around PSI, and state transitions. The protein is Cytochrome f of Buxus microphylla (Littleleaf boxwood).